The chain runs to 642 residues: Acid beta-fructofuranosidase (642 aa).

Residues 1–22 lie on the Cytoplasmic side of the membrane; sequence MRNDSPYTPLLNASHNNHRRRE. A propeptide spans 1 to 95 (removed in mature form); it reads MRNDSPYTPL…LSGNLVGEGG (95 aa). Residues 23-43 traverse the membrane as a helical; Signal-anchor for type II membrane protein segment; the sequence is LLLLFSGLLLLASIIAFSAYI. At 44–642 the chain is on the lumenal side; the sequence is AQPHADADVS…YHPDQKRQTS (599 aa). N100 carries N-linked (GlcNAc...) asparagine glycosylation. Substrate-binding positions include 119 to 122, Q138, W146, 181 to 182, and 245 to 246; these read WMND, WT, and RD. D122 is an active-site residue. The N-linked (GlcNAc...) asparagine glycan is linked to N267. Residues E300 and D333 each coordinate substrate. Cysteines 490 and 538 form a disulfide. Residues N491 and N615 are each glycosylated (N-linked (GlcNAc...) asparagine).

It belongs to the glycosyl hydrolase 32 family. May be present in two forms, a 70 kDa monomer and a heterodimer of the 30 kDa and 38 kDa subunits. The ratio of the levels of the two forms within cells appears to be regulated developmentally.

The protein localises to the membrane. Its subcellular location is the vacuole. It localises to the vacuole lumen. It carries out the reaction Hydrolysis of terminal non-reducing beta-D-fructofuranoside residues in beta-D-fructofuranosides.. It functions in the pathway glycan biosynthesis; sucrose metabolism. This Vicia faba (Broad bean) protein is Acid beta-fructofuranosidase (VCINV).